Consider the following 433-residue polypeptide: Phosphoribosylamine--glycine ligase (433 aa).

One can recognise an ATP-grasp domain in the interval 110–317 (RNFMKKYGIE…FVDIMSAVVK (208 aa)). 137–194 (IEKLGDVAVKPSGLTGGKGVKVMGDQLPDLKAAKAYTSELLEKGSVVIEERFIGEEFT) is a binding site for ATP. Mg(2+) contacts are provided by Gln-275, Glu-287, and Asn-289. Mn(2+)-binding residues include Gln-275, Glu-287, and Asn-289.

Belongs to the GARS family. Mg(2+) serves as cofactor. Mn(2+) is required as a cofactor.

The catalysed reaction is 5-phospho-beta-D-ribosylamine + glycine + ATP = N(1)-(5-phospho-beta-D-ribosyl)glycinamide + ADP + phosphate + H(+). It functions in the pathway purine metabolism; IMP biosynthesis via de novo pathway; N(1)-(5-phospho-D-ribosyl)glycinamide from 5-phospho-alpha-D-ribose 1-diphosphate: step 2/2. This Methanosarcina barkeri (strain Fusaro / DSM 804) protein is Phosphoribosylamine--glycine ligase.